The sequence spans 466 residues: Glutamate--tRNA ligase (466 aa).

The 'HIGH' region motif lies at 10 to 20 (PSPTGFLHIGG). Residues 252 to 256 (KLSKR) carry the 'KMSKS' region motif. K255 serves as a coordination point for ATP.

It belongs to the class-I aminoacyl-tRNA synthetase family. Glutamate--tRNA ligase type 1 subfamily. In terms of assembly, monomer.

It localises to the cytoplasm. It carries out the reaction tRNA(Glu) + L-glutamate + ATP = L-glutamyl-tRNA(Glu) + AMP + diphosphate. In terms of biological role, catalyzes the attachment of glutamate to tRNA(Glu) in a two-step reaction: glutamate is first activated by ATP to form Glu-AMP and then transferred to the acceptor end of tRNA(Glu). This chain is Glutamate--tRNA ligase, found in Mycoplasmopsis synoviae (strain 53) (Mycoplasma synoviae).